The following is a 153-amino-acid chain: Large ribosomal subunit protein uL30 (153 aa).

The protein belongs to the universal ribosomal protein uL30 family. Part of the 50S ribosomal subunit.

In Methanosarcina mazei (strain ATCC BAA-159 / DSM 3647 / Goe1 / Go1 / JCM 11833 / OCM 88) (Methanosarcina frisia), this protein is Large ribosomal subunit protein uL30.